The chain runs to 157 residues: UPF0225 protein PA14_50900 (157 aa).

This sequence belongs to the UPF0225 family.

The chain is UPF0225 protein PA14_50900 from Pseudomonas aeruginosa (strain UCBPP-PA14).